Consider the following 566-residue polypeptide: E3 ubiquitin-protein ligase RNF220 (566 aa).

Residue Lys277 forms a Glycyl lysine isopeptide (Lys-Gly) (interchain with G-Cter in SUMO2) linkage. Residues Lys277–His297 form a disordered region. Ser390 is modified (phosphoserine). Residues Glu485–Lys513 adopt a coiled-coil conformation. A required for targeting to the cytoplasm region spans residues Cys514–Ser522. An RING-type zinc finger spans residues Cys514–Asn553.

Interacts with SIN3B. Interacts with CTNNB1 (via Armadillo repeats 2-8). Interacts with USP7 (via MATH domain). In terms of processing, auto-ubiquitinated; leads to proteasomal degradation.

It is found in the cytoplasm. Its subcellular location is the nucleus. The catalysed reaction is S-ubiquitinyl-[E2 ubiquitin-conjugating enzyme]-L-cysteine + [acceptor protein]-L-lysine = [E2 ubiquitin-conjugating enzyme]-L-cysteine + N(6)-ubiquitinyl-[acceptor protein]-L-lysine.. Its pathway is protein modification; protein ubiquitination. E3 ubiquitin-protein ligase that promotes the ubiquitination and proteasomal degradation of SIN3B. Independently of its E3 ligase activity, acts as a CTNNB1 stabilizer through USP7-mediated deubiquitination of CTNNB1 and promotes Wnt signaling. Plays a critical role in the regulation of nuclear lamina. The protein is E3 ubiquitin-protein ligase RNF220 (RNF220) of Macaca fascicularis (Crab-eating macaque).